The following is a 123-amino-acid chain: Protein LLP homolog (123 aa).

Basic residues predominate over residues 1–21 (MAKSIRSKWKRKMRAEKRKKN). Disordered regions lie at residues 1–23 (MAKSIRSKWKRKMRAEKRKKNAP) and 55–123 (KINE…KLAW). Basic and acidic residues predominate over residues 70–89 (DSSKMDMELKRNKKNLRDQH). Basic residues predominate over residues 100-123 (QQKKLKSQCGKKKGKSKQAKKLAW).

The protein belongs to the learning-associated protein family.

The protein localises to the nucleus. It localises to the nucleolus. Its subcellular location is the chromosome. Regulates dendritic and spine growth and synaptic transmission. This Xenopus tropicalis (Western clawed frog) protein is Protein LLP homolog (llph).